We begin with the raw amino-acid sequence, 175 residues long: Glucagon family neuropeptides (175 aa).

An N-terminal signal peptide occupies residues 1-23; it reads MSGNVYKTLLTLLVYGLIMHCNV. The propeptide occupies 24-80; the sequence is YCSPDRWTPVPGAKLEEEVYDEDGNTLQDFALRAGAPGGGGPRPRWGRCTALYYPPG. The segment at 149–157 is important for receptor binding; it reads VKKYLAAVL. The residue at position 157 (leucine 157) is a Leucine amide. At lysine 168 the chain carries Lysine amide. Residues 172–175 constitute a propeptide that is removed on maturation; it reads VAYL.

The protein belongs to the glucagon family.

The protein localises to the secreted. Functionally, primary role of GRF is to release GH from the pituitary. In terms of biological role, PACAP is a neuropeptide involved in diverse array of physiological processes through activating the PACAP subfamily of class B1 G protein-coupled receptors: VIP receptor 1 (VIPR1), VIP receptor 2 (VIPR2), and PACAP type I receptor (ADCYAP1R1). Exerts neuroprotective and general cytoprotective effects due to anti-apoptotic, anti-inflammatory, and antioxidant actions. Promotes neuron projection development through the RAPGEF2/Rap1/B-Raf/ERK pathway. In chromaffin cells, induces long-lasting increase of intracellular calcium concentrations and neuroendocrine secretion. Involved in the control of glucose homeostasis, induces insulin secretion by pancreatic beta cells. PACAP exists in two bioactive forms from proteolysis of the same precursor protein, PACAP27 and PACAP38, which differ by eleven amino acid residues in the C-terminus. The protein is Glucagon family neuropeptides (ADCYAP1) of Gallus gallus (Chicken).